A 493-amino-acid polypeptide reads, in one-letter code: Glutamyl-tRNA(Gln) amidotransferase subunit A (493 aa).

Residues Lys79 and Ser159 each act as charge relay system in the active site. The active-site Acyl-ester intermediate is Ser183.

Belongs to the amidase family. GatA subfamily. In terms of assembly, heterotrimer of A, B and C subunits.

The catalysed reaction is L-glutamyl-tRNA(Gln) + L-glutamine + ATP + H2O = L-glutaminyl-tRNA(Gln) + L-glutamate + ADP + phosphate + H(+). Allows the formation of correctly charged Gln-tRNA(Gln) through the transamidation of misacylated Glu-tRNA(Gln) in organisms which lack glutaminyl-tRNA synthetase. The reaction takes place in the presence of glutamine and ATP through an activated gamma-phospho-Glu-tRNA(Gln). The chain is Glutamyl-tRNA(Gln) amidotransferase subunit A from Brucella melitensis biotype 2 (strain ATCC 23457).